Reading from the N-terminus, the 786-residue chain is Sucrose synthase (786 aa).

The segment at 259 to 736 is GT-B glycosyltransferase; the sequence is MIFSLVVLSP…ALKRVEERYN (478 aa).

The protein belongs to the glycosyltransferase 1 family. Homotetramer.

It carries out the reaction an NDP-alpha-D-glucose + D-fructose = a ribonucleoside 5'-diphosphate + sucrose + H(+). Catalyzes the reversible conversion of sucrose and a nucleotide disphosphate (NDP) into fructose and NDP-glucose; although the reaction is freely reversible in vitro, the physiological reaction seems to be sucrose cleavage. Unlike characterized plant enzymes prefers ADP as a cosubstrate, whereas plants prefer UDP. Its preference for ADP over UDP suggests it may directly link sucrose and glycogen metabolism. The chain is Sucrose synthase from Denitrovibrio acetiphilus (strain DSM 12809 / NBRC 114555 / N2460).